Here is a 256-residue protein sequence, read N- to C-terminus: Small ribosomal subunit protein uS2 (256 aa).

This sequence belongs to the universal ribosomal protein uS2 family.

The chain is Small ribosomal subunit protein uS2 from Geotalea uraniireducens (strain Rf4) (Geobacter uraniireducens).